The sequence spans 131 residues: Glycine cleavage system H protein (131 aa).

In terms of domain architecture, Lipoyl-binding spans 24 to 106 (TVRVGITDYA…YGEGWLVELQ (83 aa)). At Lys65 the chain carries N6-lipoyllysine.

Belongs to the GcvH family. In terms of assembly, the glycine cleavage system is composed of four proteins: P, T, L and H. (R)-lipoate is required as a cofactor.

Functionally, the glycine cleavage system catalyzes the degradation of glycine. The H protein shuttles the methylamine group of glycine from the P protein to the T protein. The chain is Glycine cleavage system H protein from Mycolicibacterium gilvum (strain PYR-GCK) (Mycobacterium gilvum (strain PYR-GCK)).